A 555-amino-acid chain; its full sequence is Wee1-like protein kinase 2-A (555 aa).

Disordered regions lie at residues 1-81 (MRTA…SVGA) and 149-175 (FTPE…DCRT). The segment covering 38–48 (SPVSSWRTNNC) has biased composition (polar residues). Positions 68–78 (SPSSDYSPDPS) are enriched in low complexity. Residues 149–160 (FTPESYRQTHFQ) are compositionally biased toward polar residues. A Protein kinase domain is found at 210–480 (FLEIEKIGAG…AASLAKNSVL (271 aa)). ATP is bound by residues 216–224 (IGAGEFGSV) and Lys-239. Asp-337 acts as the Proton acceptor in catalysis. Residues Asn-342 and Asp-374 each contribute to the Mg(2+) site. Residues 487–513 (AAQLQKQLNVEKFKTAMLERELKAAKL) are a coiled coil. The residue at position 549 (Ser-549) is a Phosphoserine.

The protein belongs to the protein kinase superfamily. Ser/Thr protein kinase family. WEE1 subfamily. Interacts with prmt5; this promotes protesomal degradation of wee2-a in the nucleus. The interaction with prmt5 is disrupted upon activation of the DNA replication checkpoint. Subject to proteasomal degradation in the nucleus. As to expression, detected in egg (at protein level). Oocyte-specific maternally supplied protein. Present in immature and mature oocytes and in early (pregastrula) embryos, but not in post-gastrula embryos.

It is found in the nucleus. Its subcellular location is the cytoplasm. The protein resides in the cytosol. The catalysed reaction is L-tyrosyl-[protein] + ATP = O-phospho-L-tyrosyl-[protein] + ADP + H(+). Functionally, oocyte-specific protein tyrosine kinase that phosphorylates and inhibits cdk1 and acts as a key regulator of meiosis. Required to maintain meiotic arrest in oocytes by phosphorylating cdk1 at 'Tyr-15', which inhibits cdk1 activity and prevents meiotic reentry. Negative regulator of mitosis. Involved in the mitotic DNA replication checkpoint. The polypeptide is Wee1-like protein kinase 2-A (wee2-a) (Xenopus laevis (African clawed frog)).